Consider the following 238-residue polypeptide: NEDD4-binding protein 2-like 1 (238 aa).

2 disordered regions span residues Met-1–His-36 and Val-183–Tyr-212. Residues Gln-20 to Pro-31 are compositionally biased toward pro residues. A compositionally biased stretch (polar residues) spans Ala-192–Tyr-212.

Interacts with dynactin subunit proteins, including DCTN4, DCTN5 and DCTN5.

In terms of biological role, might play a role in adipocyte differentiation and triglyceride accumulation. This Mus musculus (Mouse) protein is NEDD4-binding protein 2-like 1 (N4bp2l1).